The sequence spans 737 residues: Polyribonucleotide nucleotidyltransferase (737 aa).

Aspartate 489 and aspartate 495 together coordinate Mg(2+). A KH domain is found at 556–615; that stretch reads PKIDTIKIDVDKIKIVIGKGGETIDKIIAETGVKIDIDEEGNVSIYSSDQDAINRAKEII. The 69-residue stretch at 625-693 folds into the S1 motif domain; the sequence is DEVYRAKVVR…EKGRIDASMK (69 aa). The segment at 691–737 is disordered; it reads SMKALLPRPPKPEHDEKGEKSERPHRPRHQKDHKPKKEFTETPKDSE. The span at 700-714 shows a compositional bias: basic and acidic residues; sequence PKPEHDEKGEKSERP. The span at 715-724 shows a compositional bias: basic residues; the sequence is HRPRHQKDHK. Residues 725 to 737 show a composition bias toward basic and acidic residues; it reads PKKEFTETPKDSE.

It belongs to the polyribonucleotide nucleotidyltransferase family. Mg(2+) is required as a cofactor.

It is found in the cytoplasm. The enzyme catalyses RNA(n+1) + phosphate = RNA(n) + a ribonucleoside 5'-diphosphate. Functionally, involved in mRNA degradation. Catalyzes the phosphorolysis of single-stranded polyribonucleotides processively in the 3'- to 5'-direction. The polypeptide is Polyribonucleotide nucleotidyltransferase (Streptococcus pneumoniae (strain JJA)).